The sequence spans 475 residues: MHDNTYLPDHFLRHIAAIMPAHLSMDEFVASCRRPLRRSIRVNTLKISVAAFVARMQPLGWQLDPVPWCDTGFWLSREDESVPLGNTAEHLSGLFYIQEASSMLPVTALFACEQTRRDGMLLDAAAAPGSKTTQIAALMNNQGMLVANEYSSSRLKVLSANLQRCGVTNVGMTHFDAKVFGQWLPETFDAILLDAPCSGEGSVRKDEDALRNWSIESIDEIAAVQQGLLESAFHALKPGGVLVYSTCTLSLQENQAVCQSLLDKFGAAFSFDSLADLFPAAEQACTPEGYLHVWPQIFDSEGFFVARLRKHYSVPNTMFKPGKLGKFPFLPLPAKESEPMLREIEAAFGVVPQGNLFGRSEEIWLFPQRFEQVQGKLRFDRIGLKLAETFKKGYRLTHEWALAYGDGASKGFVELGIADAREFMMGRDVWPEQAAGTGEVIVRYQGHTLGMGKWVGSRVKNALPRELVRDNNLFV.

S-adenosyl-L-methionine is bound by residues 125-131 (AAAPGSK), E149, D176, and D194. C247 serves as the catalytic Nucleophile.

This sequence belongs to the class I-like SAM-binding methyltransferase superfamily. RsmB/NOP family.

It is found in the cytoplasm. It catalyses the reaction cytidine(1407) in 16S rRNA + S-adenosyl-L-methionine = 5-methylcytidine(1407) in 16S rRNA + S-adenosyl-L-homocysteine + H(+). Its function is as follows. Specifically methylates the cytosine at position 1407 (m5C1407) of 16S rRNA. This Aeromonas hydrophila subsp. hydrophila (strain ATCC 7966 / DSM 30187 / BCRC 13018 / CCUG 14551 / JCM 1027 / KCTC 2358 / NCIMB 9240 / NCTC 8049) protein is Ribosomal RNA small subunit methyltransferase F.